Reading from the N-terminus, the 91-residue chain is Ragulator complex protein LAMTOR5 homolog (91 aa).

This sequence belongs to the LAMTOR5 family. As to quaternary structure, part of the Ragulator complex.

Its subcellular location is the cytoplasm. The protein localises to the lysosome. Functionally, regulator of the TOR pathway, a signaling cascade that promotes cell growth in response to growth factors, energy levels, and amino acids. As part of the Ragulator complex, may activate the TOR signaling cascade in response to amino acids. This Ixodes scapularis (Black-legged tick) protein is Ragulator complex protein LAMTOR5 homolog.